Here is a 158-residue protein sequence, read N- to C-terminus: Pyruvoyl-dependent arginine decarboxylase (158 aa).

S44 is modified (pyruvic acid (Ser)).

Belongs to the PdaD family. Requires pyruvate as cofactor.

It catalyses the reaction L-arginine + H(+) = agmatine + CO2. This is Pyruvoyl-dependent arginine decarboxylase from Thermococcus sibiricus (strain DSM 12597 / MM 739).